Consider the following 107-residue polypeptide: U1-lycotoxin-Ls1e (107 aa).

A signal peptide spans 1 to 20; that stretch reads MMKVLVVFALLVTLISYSSS. A propeptide spanning residues 21 to 41 is cleaved from the precursor; the sequence is EGIDDLEADELLSLMANEQTR. 4 cysteine pairs are disulfide-bonded: Cys44-Cys59, Cys51-Cys68, Cys58-Cys86, and Cys70-Cys84.

Belongs to the neurotoxin 19 (CSTX) family. 04 (U1-Lctx) subfamily. As to expression, expressed by the venom gland.

The protein localises to the secreted. This Lycosa singoriensis (Wolf spider) protein is U1-lycotoxin-Ls1e.